A 423-amino-acid polypeptide reads, in one-letter code: Enolase (423 aa).

Position 165 (glutamine 165) interacts with (2R)-2-phosphoglycerate. Glutamate 209 serves as the catalytic Proton donor. Mg(2+)-binding residues include aspartate 244, glutamate 285, and aspartate 310. The (2R)-2-phosphoglycerate site is built by lysine 335, arginine 364, serine 365, and lysine 386. The active-site Proton acceptor is lysine 335.

Belongs to the enolase family. As to quaternary structure, homooctamer formed by a tetramer of dimers. The cofactor is Mg(2+).

The protein localises to the cytoplasm. Its subcellular location is the secreted. It is found in the cell surface. The catalysed reaction is (2R)-2-phosphoglycerate = phosphoenolpyruvate + H2O. It functions in the pathway carbohydrate degradation; glycolysis; pyruvate from D-glyceraldehyde 3-phosphate: step 4/5. The covalent binding to the substrate causes inactivation of the enzyme, and possibly serves as a signal for the export of the protein. Functionally, catalyzes the reversible conversion of 2-phosphoglycerate (2-PG) into phosphoenolpyruvate (PEP). It is essential for the degradation of carbohydrates via glycolysis. The polypeptide is Enolase (Methanocaldococcus jannaschii (strain ATCC 43067 / DSM 2661 / JAL-1 / JCM 10045 / NBRC 100440) (Methanococcus jannaschii)).